A 216-amino-acid polypeptide reads, in one-letter code: Soluble inorganic pyrophosphatase 5 (216 aa).

Positions M1–P20 are disordered. Over residues T8 to P20 the composition is skewed to polar residues. Residues K66 and R80 each coordinate substrate. The active-site Proton donor is Y88. Y92 is a binding site for substrate. The Mg(2+) site is built by D102, D107, and D139. Substrate is bound at residue Y176.

Belongs to the PPase family. Mg(2+) is required as a cofactor.

Its subcellular location is the cytoplasm. It catalyses the reaction diphosphate + H2O = 2 phosphate + H(+). This chain is Soluble inorganic pyrophosphatase 5, found in Arabidopsis thaliana (Mouse-ear cress).